We begin with the raw amino-acid sequence, 376 residues long: Glucose-1-phosphate adenylyltransferase (376 aa).

Alpha-D-glucose 1-phosphate-binding positions include Tyr-101, Gly-166, 181-182 (EK), and Ser-192.

It belongs to the bacterial/plant glucose-1-phosphate adenylyltransferase family. As to quaternary structure, homotetramer.

The catalysed reaction is alpha-D-glucose 1-phosphate + ATP + H(+) = ADP-alpha-D-glucose + diphosphate. The protein operates within glycan biosynthesis; glycogen biosynthesis. Involved in the biosynthesis of ADP-glucose, a building block required for the elongation reactions to produce glycogen. Catalyzes the reaction between ATP and alpha-D-glucose 1-phosphate (G1P) to produce pyrophosphate and ADP-Glc. In Bacillus thuringiensis (strain Al Hakam), this protein is Glucose-1-phosphate adenylyltransferase.